A 328-amino-acid polypeptide reads, in one-letter code: GMP reductase (328 aa).

C176 serves as the catalytic Thioimidate intermediate. 205–228 (IIADGGIRTHGDIAKSIRFGASMV) serves as a coordination point for NADP(+).

Belongs to the IMPDH/GMPR family. GuaC type 2 subfamily.

It carries out the reaction IMP + NH4(+) + NADP(+) = GMP + NADPH + 2 H(+). Catalyzes the irreversible NADPH-dependent deamination of GMP to IMP. It functions in the conversion of nucleobase, nucleoside and nucleotide derivatives of G to A nucleotides, and in maintaining the intracellular balance of A and G nucleotides. This is GMP reductase from Streptococcus pneumoniae (strain Hungary19A-6).